A 198-amino-acid polypeptide reads, in one-letter code: MGTEVKLLVGLGNPGPEYERTRHNAGFWLVDDFCRRHAITLSPDTKSKALIGRWQQGAHDLRIVLPQNFMNRSGFSVAALANFYKIPANEILVAYDELDLPPGVAKFKKGGGAGGHNGIKDIIAQTGSQDFMRLRIGIGHPGDKTKVTGFVLGKASANEQRLIDDCIDEASRSIDTLMAEGWGTALQRLHSYRPEQKG.

Y18 contacts tRNA. H23 (proton acceptor) is an active-site residue. TRNA-binding residues include F69, N71, and N117.

The protein belongs to the PTH family. In terms of assembly, monomer.

It is found in the cytoplasm. The enzyme catalyses an N-acyl-L-alpha-aminoacyl-tRNA + H2O = an N-acyl-L-amino acid + a tRNA + H(+). Its function is as follows. Hydrolyzes ribosome-free peptidyl-tRNAs (with 1 or more amino acids incorporated), which drop off the ribosome during protein synthesis, or as a result of ribosome stalling. In terms of biological role, catalyzes the release of premature peptidyl moieties from peptidyl-tRNA molecules trapped in stalled 50S ribosomal subunits, and thus maintains levels of free tRNAs and 50S ribosomes. This chain is Peptidyl-tRNA hydrolase, found in Idiomarina loihiensis (strain ATCC BAA-735 / DSM 15497 / L2-TR).